Consider the following 375-residue polypeptide: POU domain, class 3, transcription factor 1-A (375 aa).

Disordered regions lie at residues 1-29 (MAAT…RMHQ), 67-138 (PASD…HQPL), and 151-200 (MLGP…PSSD). Composition is skewed to polar residues over residues 107–117 (VHQQSPSSHAW), 129–138 (SPSSNSHQPL), and 151–160 (MLGPQASSLH). The segment covering 162 to 177 (SMRDPLHDDPGVHDTQ) has biased composition (basic and acidic residues). One can recognise a POU-specific domain in the interval 194–268 (EDAPSSDDLE…LLNKWLEETD (75 aa)). A DNA-binding region (homeobox) is located at residues 286–345 (KRKKRTSIEVGVKGALENHFLKCPKPSAHEITSLADSLQLEKEVVRVWFCNRRQKEKRMT).

This sequence belongs to the POU transcription factor family. Class-3 subfamily. As to expression, in embryos at the neural fold stage, localized primarily in the anterior neural plate, and localized mostly in the anterior region of the nerve cord of neurula stage embryos. In tailbud stages, expressed predominantly in the eye and brain, with weak expression along the length of the nerve cord. In adults, expressed in skin and brain.

The protein localises to the nucleus. Functionally, acts as a transcription factor. May play a role in neuronal differentiation. The sequence is that of POU domain, class 3, transcription factor 1-A (pou3f1-a) from Xenopus laevis (African clawed frog).